Here is a 726-residue protein sequence, read N- to C-terminus: X-ray repair cross-complementing protein 5 (726 aa).

One can recognise a VWFA domain in the interval 8–160 (AVVLCMDVGL…ANLKKAEITL (153 aa)). The interval 137 to 164 (LSSPFSVDQLEVIIANLKKAEITLQFFL) is leucine-zipper. Residues 175–186 (GSSNNRGNAGSS) show a composition bias toward low complexity. A disordered region spans residues 175 to 198 (GSSNNRGNAGSSDRGCGPGKGLSD). Residues 253-449 (GSSLSIRIVG…NKKFTPTESQ (197 aa)) enclose the Ku domain. Residues 714–722 (EDEGDVDDL) carry the EEXXXDL motif motif.

This sequence belongs to the ku80 family. In terms of assembly, heterodimer composed of xrcc5/Ku80 and xrcc6/Ku70. Post-translationally, ubiquitinated via 'Lys-48'-linked polyubiquitination at DNA double strand break sites (DSBs), leading to its release from DSBs and subsequent proteasomal degradation. Polyubiquitination is not required for completion of NHEJ. As to expression, expressed at high levels in oocyte and testis.

The protein localises to the nucleus. Its function is as follows. Single-stranded DNA-dependent ATP-dependent helicase that plays a key role in DNA non-homologous end joining (NHEJ). The polypeptide is X-ray repair cross-complementing protein 5 (Xenopus laevis (African clawed frog)).